The sequence spans 324 residues: MKTVTGFASATVGNVACGFDVLGFAITEPGDEVVLALHDERRSDCPVSITSIVGDGGALPLDPKKNTSSFVVLKFLEYIRTTKGISFDGHIDLVLKKNLPLSSGMGSSAASAAAALIAANELFGSPCTKMELVHFAIEGERVACGSAHADNAAPAMLGNFILIRSYNPLDLITIKPPKNLFGTLVHPHTELKTSFARSVLPKSIPLSTATQQWGNVGALIAGLLMEDYDLIGRALVDVVAEPKRAPLIPGFNEVKQAALDAGALGCSIAGSGPSVFAFSSSRQTAEAVGSAMQSAFLHSRAALQSDMWVSPICSQGARIISTTS.

100–110 (PLSSGMGSSAA) lines the ATP pocket.

It belongs to the GHMP kinase family. Homoserine kinase subfamily.

It is found in the cytoplasm. The enzyme catalyses L-homoserine + ATP = O-phospho-L-homoserine + ADP + H(+). It participates in amino-acid biosynthesis; L-threonine biosynthesis; L-threonine from L-aspartate: step 4/5. Catalyzes the ATP-dependent phosphorylation of L-homoserine to L-homoserine phosphate. This is Homoserine kinase from Chlorobaculum tepidum (strain ATCC 49652 / DSM 12025 / NBRC 103806 / TLS) (Chlorobium tepidum).